The sequence spans 68 residues: Large ribosomal subunit protein uL29 (68 aa).

It belongs to the universal ribosomal protein uL29 family.

The sequence is that of Large ribosomal subunit protein uL29 from Streptococcus pneumoniae (strain JJA).